A 245-amino-acid chain; its full sequence is 1-(5-phosphoribosyl)-5-[(5-phosphoribosylamino)methylideneamino] imidazole-4-carboxamide isomerase (245 aa).

Asp-7 acts as the Proton acceptor in catalysis. The active-site Proton donor is Asp-129.

It belongs to the HisA/HisF family.

It is found in the cytoplasm. It catalyses the reaction 1-(5-phospho-beta-D-ribosyl)-5-[(5-phospho-beta-D-ribosylamino)methylideneamino]imidazole-4-carboxamide = 5-[(5-phospho-1-deoxy-D-ribulos-1-ylimino)methylamino]-1-(5-phospho-beta-D-ribosyl)imidazole-4-carboxamide. The protein operates within amino-acid biosynthesis; L-histidine biosynthesis; L-histidine from 5-phospho-alpha-D-ribose 1-diphosphate: step 4/9. The polypeptide is 1-(5-phosphoribosyl)-5-[(5-phosphoribosylamino)methylideneamino] imidazole-4-carboxamide isomerase (Escherichia coli O6:K15:H31 (strain 536 / UPEC)).